The following is a 442-amino-acid chain: Vitellogenin-2 (442 aa).

Residues 1-19 form the signal peptide; that stretch reads MNPLRTLCVMACLLAVAMG. The span at 21-33 shows a compositional bias: low complexity; the sequence is PQSGNRSGRRSNS. The tract at residues 21–44 is disordered; the sequence is PQSGNRSGRRSNSLDNVEQPSNWV. Phosphoserine is present on residues serine 31 and serine 33. Positions 34–44 are enriched in polar residues; it reads LDNVEQPSNWV. Serine 82 carries the phosphoserine modification. 2 disordered regions span residues 165–200 and 408–442; these read QPYETTDYSNEEQSQRSSSEEQQTQRRKQNGEQDDT and KSPFGRSTPAQKQTGYHQVHQPWRQSSSNQGSRRQ. Threonine 170 carries the phosphothreonine modification. Tyrosine 172 carries the post-translational modification Sulfotyrosine. Residues serine 173, serine 178, serine 181, serine 182, and serine 183 each carry the phosphoserine modification. Composition is skewed to low complexity over residues 175-186 and 431-442; these read EEQSQRSSSEEQ and RQSSSNQGSRRQ.

The protein belongs to the AB hydrolase superfamily. Lipase family. Post-translationally, tyrosine sulfation occurs in the female only and plays an essential functional role. As to expression, synthesized in the fat body and ovarian follicle cells and accumulate in the oocyte.

Its subcellular location is the secreted. Its function is as follows. Vitellogenin is the major yolk protein of eggs where it is used as a food source during embryogenesis. Vitellogenins and their receptor yl/yolkless are required for maintenance of microtubule plus-end orientation towards the posterior pole of oocytes. Involved in polarized localization of germ plasm components, such as osk mRNA and vas protein, to the oocyte posterior cortex. Receptor-mediated endocytosis by yl/yolkless is crucial for actin reorganization, mediated by osk isoform A/Long, required to anchor germ plasm components to the oocyte cortex. The protein is Vitellogenin-2 (Yp2) of Drosophila melanogaster (Fruit fly).